The sequence spans 277 residues: Probable cytochrome c oxidase subunit 3 (277 aa).

6 helical membrane-spanning segments follow: residues 20 to 40, 45 to 65, 88 to 108, 173 to 193, 211 to 231, and 255 to 275; these read PWPI…VSFM, FNHY…YSWW, IGMA…FASF, CVTA…MQAY, FYLA…FLIV, and AWYW…VYIF.

This sequence belongs to the cytochrome c oxidase subunit 3 family.

Its subcellular location is the cell membrane. It catalyses the reaction 4 Fe(II)-[cytochrome c] + O2 + 8 H(+)(in) = 4 Fe(III)-[cytochrome c] + 2 H2O + 4 H(+)(out). This is Probable cytochrome c oxidase subunit 3 (ctaE) from Rickettsia bellii (strain RML369-C).